We begin with the raw amino-acid sequence, 37 residues long: Cytochrome b6-f complex subunit 5 (37 aa).

Residues 5 to 25 form a helical membrane-spanning segment; sequence LLSGIVLGLVPVTIAGLFVTA.

Belongs to the PetG family. In terms of assembly, the 4 large subunits of the cytochrome b6-f complex are cytochrome b6, subunit IV (17 kDa polypeptide, PetD), cytochrome f and the Rieske protein, while the 4 small subunits are PetG, PetL, PetM and PetN. The complex functions as a dimer.

It is found in the plastid. The protein resides in the chloroplast thylakoid membrane. In terms of biological role, component of the cytochrome b6-f complex, which mediates electron transfer between photosystem II (PSII) and photosystem I (PSI), cyclic electron flow around PSI, and state transitions. PetG is required for either the stability or assembly of the cytochrome b6-f complex. The sequence is that of Cytochrome b6-f complex subunit 5 from Stigeoclonium helveticum (Green alga).